A 331-amino-acid polypeptide reads, in one-letter code: MKKIKILLDTMGYENTLEHVIKAAKDFYYQHEDDLEIILVGNEQLIKPLLDNDWRLFPIVHTEVSIEQNDTILSARKKQNSSMHLALRYLKDKQANGMLTAGNSAVFVYNAYATIGLLEHIKKPAFMPFVPTIDGGVTNLLDVGASIDLDGRDLFNFAIMANTIAKMRTPNPRVGVLNIGTEDHKGLPYHQEANELLKTSNLNYVGFVEPKTILEREVDVLVADGFSGNIALKTMEGVGKTISNFLKNEYKKPKNLFAALLSKPIFKKMKKAFDYKEHAGAFVLGLDGILVKTHGSADYQQFMSALKILYETIKADVLNEIKKDLNNYYGQ.

The protein belongs to the PlsX family. As to quaternary structure, homodimer. Probably interacts with PlsY.

It is found in the cytoplasm. The enzyme catalyses a fatty acyl-[ACP] + phosphate = an acyl phosphate + holo-[ACP]. Its pathway is lipid metabolism; phospholipid metabolism. Its function is as follows. Catalyzes the reversible formation of acyl-phosphate (acyl-PO(4)) from acyl-[acyl-carrier-protein] (acyl-ACP). This enzyme utilizes acyl-ACP as fatty acyl donor, but not acyl-CoA. The polypeptide is Phosphate acyltransferase (Ureaplasma urealyticum serovar 10 (strain ATCC 33699 / Western)).